We begin with the raw amino-acid sequence, 226 residues long: UPF0758 protein SE_1336 (226 aa).

The 123-residue stretch at 102-224 folds into the MPN domain; sequence QITHPSDVAS…FTSLVEAGYF (123 aa). Zn(2+)-binding residues include His173, His175, and Asp186. The JAMM motif signature appears at 173 to 186; it reads HNHPSGDVTPSKED.

This sequence belongs to the UPF0758 family.

The protein is UPF0758 protein SE_1336 of Staphylococcus epidermidis (strain ATCC 12228 / FDA PCI 1200).